We begin with the raw amino-acid sequence, 454 residues long: tRNA modification GTPase MnmE (454 aa).

Positions 23, 80, and 120 each coordinate (6S)-5-formyl-5,6,7,8-tetrahydrofolate. Residues 216 to 377 (GMKVVIAGRP…LRNHLKQSMG (162 aa)) enclose the TrmE-type G domain. Residue asparagine 226 coordinates K(+). Residues 226–231 (NAGKSS), 245–251 (TDIAGTT), 270–273 (DTAG), 335–338 (NKAD), and 358–360 (SAR) each bind GTP. Serine 230 serves as a coordination point for Mg(2+). The K(+) site is built by threonine 245, isoleucine 247, and threonine 250. Residue threonine 251 participates in Mg(2+) binding. Lysine 454 is a binding site for (6S)-5-formyl-5,6,7,8-tetrahydrofolate.

Belongs to the TRAFAC class TrmE-Era-EngA-EngB-Septin-like GTPase superfamily. TrmE GTPase family. As to quaternary structure, homodimer. Heterotetramer of two MnmE and two MnmG subunits. The cofactor is K(+).

Its subcellular location is the cytoplasm. In terms of biological role, exhibits a very high intrinsic GTPase hydrolysis rate. Involved in the addition of a carboxymethylaminomethyl (cmnm) group at the wobble position (U34) of certain tRNAs, forming tRNA-cmnm(5)s(2)U34. The sequence is that of tRNA modification GTPase MnmE from Salmonella gallinarum (strain 287/91 / NCTC 13346).